Consider the following 161-residue polypeptide: Anthranilate 1,2-dioxygenase small subunit (161 aa).

Belongs to the bacterial ring-hydroxylating dioxygenase beta subunit family. Part of a multicomponent enzyme system composed of a reductase (AndAa), a ferredoxin (AndAb) and a two-subunit oxygenase component (AndAc and AndAd).

The enzyme catalyses anthranilate + NADH + O2 + 3 H(+) = catechol + NH4(+) + CO2 + NAD(+). It catalyses the reaction anthranilate + NADPH + O2 + 3 H(+) = catechol + NH4(+) + CO2 + NADP(+). It functions in the pathway aromatic compound metabolism; anthranilate degradation via hydroxylation; catechol from anthranilate: step 1/1. Functionally, oxygenase component of anthranilate dioxygenase multicomponent enzyme system which catalyzes the incorporation of both atoms of molecular oxygen into anthranilate to form catechol. Can also act on benzoate and salicylate but not on 2-chlorobenzoate or o-toluate. In Burkholderia cepacia (Pseudomonas cepacia), this protein is Anthranilate 1,2-dioxygenase small subunit.